A 431-amino-acid chain; its full sequence is Enolase (431 aa).

Residue Gln-166 participates in (2R)-2-phosphoglycerate binding. Residue Glu-208 is the Proton donor of the active site. Mg(2+) is bound by residues Asp-245, Glu-289, and Asp-316. The (2R)-2-phosphoglycerate site is built by Lys-341, Arg-370, Ser-371, and Lys-392. Lys-341 functions as the Proton acceptor in the catalytic mechanism.

This sequence belongs to the enolase family. Mg(2+) serves as cofactor.

It localises to the cytoplasm. It is found in the secreted. The protein localises to the cell surface. It catalyses the reaction (2R)-2-phosphoglycerate = phosphoenolpyruvate + H2O. It participates in carbohydrate degradation; glycolysis; pyruvate from D-glyceraldehyde 3-phosphate: step 4/5. In terms of biological role, catalyzes the reversible conversion of 2-phosphoglycerate (2-PG) into phosphoenolpyruvate (PEP). It is essential for the degradation of carbohydrates via glycolysis. The protein is Enolase of Ruminiclostridium cellulolyticum (strain ATCC 35319 / DSM 5812 / JCM 6584 / H10) (Clostridium cellulolyticum).